Here is a 245-residue protein sequence, read N- to C-terminus: MIVIPAIDLKEGKCVRLEQGLMDKDTVFCDNPAEQAREWERQGGELLHIVDLDGAFAGKPANKSAIEAIVKAVRIPTQLGGGIRDIETIKAYLDLGLSRVILGTAAQRNPKLVEEACKLFPGRIVVGIDAKNGLVAVQGWAEVTDVYAVDLARLFEGYGVTAVIYTDISRDGMMQGPNIDATRALAEAISIPVIASGGVSSLKDIENLMAVESAGVTGVITGKAIYTGAIKLAEAVALTKKCRQG.

Residue Asp-8 is the Proton acceptor of the active site. The active-site Proton donor is the Asp-129.

Belongs to the HisA/HisF family.

Its subcellular location is the cytoplasm. The enzyme catalyses 1-(5-phospho-beta-D-ribosyl)-5-[(5-phospho-beta-D-ribosylamino)methylideneamino]imidazole-4-carboxamide = 5-[(5-phospho-1-deoxy-D-ribulos-1-ylimino)methylamino]-1-(5-phospho-beta-D-ribosyl)imidazole-4-carboxamide. The protein operates within amino-acid biosynthesis; L-histidine biosynthesis; L-histidine from 5-phospho-alpha-D-ribose 1-diphosphate: step 4/9. The polypeptide is 1-(5-phosphoribosyl)-5-[(5-phosphoribosylamino)methylideneamino] imidazole-4-carboxamide isomerase (Geotalea uraniireducens (strain Rf4) (Geobacter uraniireducens)).